A 241-amino-acid polypeptide reads, in one-letter code: Pyridoxine/pyridoxamine 5'-phosphate oxidase (241 aa).

The disordered stretch occupies residues 1–35 (MASNPPSAASPRRTAVSPGADRPDGPDPAGQRQSY). Residues 32–35 (RQSY) and Lys-92 each bind substrate. FMN is bound by residues 87-92 (RTVLLK), 102-103 (YT), Arg-108, Lys-109, and Gln-131. 3 residues coordinate substrate: Tyr-149, Arg-153, and Ser-157. FMN-binding positions include 166–167 (QS) and Trp-212. Residue 218-220 (RLH) participates in substrate binding. An FMN-binding site is contributed by Arg-222.

The protein belongs to the pyridoxamine 5'-phosphate oxidase family. In terms of assembly, homodimer. The cofactor is FMN.

The catalysed reaction is pyridoxamine 5'-phosphate + O2 + H2O = pyridoxal 5'-phosphate + H2O2 + NH4(+). It carries out the reaction pyridoxine 5'-phosphate + O2 = pyridoxal 5'-phosphate + H2O2. The protein operates within cofactor metabolism; pyridoxal 5'-phosphate salvage; pyridoxal 5'-phosphate from pyridoxamine 5'-phosphate: step 1/1. It participates in cofactor metabolism; pyridoxal 5'-phosphate salvage; pyridoxal 5'-phosphate from pyridoxine 5'-phosphate: step 1/1. Its function is as follows. Catalyzes the oxidation of either pyridoxine 5'-phosphate (PNP) or pyridoxamine 5'-phosphate (PMP) into pyridoxal 5'-phosphate (PLP). This Frankia alni (strain DSM 45986 / CECT 9034 / ACN14a) protein is Pyridoxine/pyridoxamine 5'-phosphate oxidase.